Here is a 178-residue protein sequence, read N- to C-terminus: RNA replicase polyprotein (178 aa).

Belongs to the tymovirus NS35 RNA replicase polyprotein family.

The catalysed reaction is RNA(n) + a ribonucleoside 5'-triphosphate = RNA(n+1) + diphosphate. This chain is RNA replicase polyprotein, found in Physalis heterophylla (PhMV).